A 217-amino-acid polypeptide reads, in one-letter code: Superoxide dismutase [Mn], mitochondrial (217 aa).

The transit peptide at 1–17 (MFVARKISPNCKPGVRG) directs the protein to the mitochondrion. H43, H91, D175, and H179 together coordinate Mn(2+).

Belongs to the iron/manganese superoxide dismutase family. In terms of assembly, homotetramer. It depends on Mn(2+) as a cofactor.

It is found in the mitochondrion matrix. It catalyses the reaction 2 superoxide + 2 H(+) = H2O2 + O2. Its function is as follows. Destroys superoxide anion radicals which are normally produced within the cells and which are toxic to biological systems. This chain is Superoxide dismutase [Mn], mitochondrial (Sod2), found in Drosophila melanogaster (Fruit fly).